A 526-amino-acid polypeptide reads, in one-letter code: Peptide chain release factor 3 (526 aa).

A tr-type G domain is found at 9-277 (DKRRTFAIIS…GIVEWAPKPL (269 aa)). Residues 18 to 25 (SHPDAGKT), 86 to 90 (DTPGH), and 140 to 143 (NKLD) each bind GTP.

Belongs to the TRAFAC class translation factor GTPase superfamily. Classic translation factor GTPase family. PrfC subfamily.

It localises to the cytoplasm. Increases the formation of ribosomal termination complexes and stimulates activities of RF-1 and RF-2. It binds guanine nucleotides and has strong preference for UGA stop codons. It may interact directly with the ribosome. The stimulation of RF-1 and RF-2 is significantly reduced by GTP and GDP, but not by GMP. The protein is Peptide chain release factor 3 of Shewanella putrefaciens (strain CN-32 / ATCC BAA-453).